The following is a 393-amino-acid chain: Phosphoglycerate kinase (393 aa).

Substrate is bound by residues 21-23 (DMN), Arg36, 59-62 (HLGR), Arg114, and Arg147. ATP is bound by residues Lys198, Glu320, and 346–349 (GGDT).

This sequence belongs to the phosphoglycerate kinase family. Monomer.

The protein resides in the cytoplasm. It catalyses the reaction (2R)-3-phosphoglycerate + ATP = (2R)-3-phospho-glyceroyl phosphate + ADP. Its pathway is carbohydrate degradation; glycolysis; pyruvate from D-glyceraldehyde 3-phosphate: step 2/5. This is Phosphoglycerate kinase from Thiobacillus denitrificans (strain ATCC 25259 / T1).